Reading from the N-terminus, the 331-residue chain is Ketol-acid reductoisomerase (NADP(+)) (331 aa).

One can recognise a KARI N-terminal Rossmann domain in the interval 2–182 (AQLFYDTDAD…GGTRAGILET (181 aa)). Residues 25–28 (YGSQ), serine 51, serine 53, and 83–86 (DEFQ) contribute to the NADP(+) site. Residue histidine 108 is part of the active site. NADP(+) is bound at residue glycine 134. Positions 183–328 (NFKEETETDL…KGLRSMFSWL (146 aa)) constitute a KARI C-terminal knotted domain. Mg(2+)-binding residues include aspartate 191, glutamate 195, glutamate 227, and glutamate 231. Serine 252 serves as a coordination point for substrate.

It belongs to the ketol-acid reductoisomerase family. Mg(2+) serves as cofactor.

The enzyme catalyses (2R)-2,3-dihydroxy-3-methylbutanoate + NADP(+) = (2S)-2-acetolactate + NADPH + H(+). It carries out the reaction (2R,3R)-2,3-dihydroxy-3-methylpentanoate + NADP(+) = (S)-2-ethyl-2-hydroxy-3-oxobutanoate + NADPH + H(+). The protein operates within amino-acid biosynthesis; L-isoleucine biosynthesis; L-isoleucine from 2-oxobutanoate: step 2/4. It participates in amino-acid biosynthesis; L-valine biosynthesis; L-valine from pyruvate: step 2/4. In terms of biological role, involved in the biosynthesis of branched-chain amino acids (BCAA). Catalyzes an alkyl-migration followed by a ketol-acid reduction of (S)-2-acetolactate (S2AL) to yield (R)-2,3-dihydroxy-isovalerate. In the isomerase reaction, S2AL is rearranged via a Mg-dependent methyl migration to produce 3-hydroxy-3-methyl-2-ketobutyrate (HMKB). In the reductase reaction, this 2-ketoacid undergoes a metal-dependent reduction by NADPH to yield (R)-2,3-dihydroxy-isovalerate. This chain is Ketol-acid reductoisomerase (NADP(+)), found in Synechococcus sp. (strain WH7803).